The sequence spans 582 residues: MNKLYIGNVSEQASALDLESIFEQWKIPFSAPFLVKSGYAFVDCPDEKVAMRAIDTLSGKVELHGKVLEVEHSVPKRQRSCKLQIRNIPPHMQWEVLDGLLAQYGTVESCEQVNTDTETAVVNVRYGAKDQAREAMDKLNGFLMENYALKVSYIPDETAAADAPAVGGRRGFNPRGPPRQGSPSLGARPKLQSDVPLRLLVPTQFVGAIIGKEGATIRNITKQTHSKIDIHRKENAGAAEKPITVHSTPEGCSSACRNIMEIMQKEAIDTKITEEIPLKILAHNNFVGRLIGKEGRNLKKIEQDTDTKITISPLQDLTLYNPERTITVKGTLDACAKAEEEIMKKVRESYENDVAAMHLQSNLIPGLNLNALGLFPGAASGGISPSVVSGPPPGAQAGYQSFGAQMESETVHLFIPALAVGAIIGKQGQHIKQLSRFAGASIKIAPADGIDAKQRMVIISGPPEAQFKAQGRIFGKLKEENFFGPKEEVKLEAHIKVPSFAAGRVIGKGGKTVNELQNLTSAEVVVPRDQTPDENDQVVVKITGHFYASQLAQRKIQEIISQVRRQQQPKPSAAGPPVARRK.

RRM domains are found at residues 2 to 75 (NKLY…HSVP) and 81 to 156 (CKLQ…YIPD). The disordered stretch occupies residues 164–190 (PAVGGRRGFNPRGPPRQGSPSLGARPK). Ser-182 is subject to Phosphoserine. KH domains lie at 194–259 (DVPL…CRNI), 275–342 (EIPL…EEEI), 408–473 (SETV…QGRI), and 490–556 (KLEA…QRKI). Residues 562–582 (QVRRQQQPKPSAAGPPVARRK) form a disordered region.

The protein belongs to the RRM IMP/VICKZ family. As to quaternary structure, homodimer and multimer.

It localises to the cytoplasm. The protein resides in the nucleus. Its subcellular location is the P-body. The protein localises to the stress granule. In terms of biological role, RNA-binding factor that may recruit target transcripts to cytoplasmic protein-RNA complexes (mRNPs). This transcript 'caging' into mRNPs allows mRNA transport and transient storage. It also modulates the rate and location at which target transcripts encounter the translational apparatus and shields them from endonuclease attacks or microRNA-mediated degradation. Preferentially binds to N6-methyladenosine (m6A)-containing mRNAs and increases their stability. Involved in neuronal crest migration. This is Insulin-like growth factor 2 mRNA-binding protein 3 (igf2bp3) from Danio rerio (Zebrafish).